Reading from the N-terminus, the 381-residue chain is Protein COS6 (381 aa).

Topologically, residues 1–42 are cytoplasmic; sequence MKENELKNEKSVDVLSVKQLESQKTVLPQDLFRSSFTWFCYE. A helical membrane pass occupies residues 43-63; sequence IYKSLVFRIWMLLWLPLSVWW. Residues 64–69 lie on the Extracellular side of the membrane; sequence KLSNNW. The helical transmembrane segment at 70–90 threads the bilayer; it reads IYPLMVSLLVLFWGPVFVLVI. The Cytoplasmic portion of the chain corresponds to 91–381; that stretch reads FRLSRKRSLS…QLSCSEESLA (291 aa).

It belongs to the DUP/COS family.

It localises to the membrane. The sequence is that of Protein COS6 (COS6) from Saccharomyces cerevisiae (strain ATCC 204508 / S288c) (Baker's yeast).